A 536-amino-acid polypeptide reads, in one-letter code: Lysosomal acid glucosylceramidase (536 aa).

An N-terminal signal peptide occupies residues 1-39; it reads MEFSSPSREECPKPLSRVSIMAGSLTGLLLLQAVSWASG. 2 disulfide bridges follow: cysteine 43–cysteine 55 and cysteine 57–cysteine 62. N-linked (GlcNAc...) asparagine glycosylation is found at asparagine 58, asparagine 98, and asparagine 185. Glutamate 274 (proton donor) is an active-site residue. Asparagine 309 is a glycosylation site (N-linked (GlcNAc...) asparagine). Residue glutamate 379 is the Nucleophile of the active site. Asparagine 501 carries an N-linked (GlcNAc...) asparagine glycan.

This sequence belongs to the glycosyl hydrolase 30 family. As to quaternary structure, interacts with saposin-C. Interacts with SCARB2. Interacts with TCP1. May interacts with SNCA; this interaction may inhibit the glucosylceramidase activity. Interacts with GRN; this interaction prevents aggregation of GBA1-SCARB2 complex via interaction with HSPA1A upon stress.

It localises to the lysosome membrane. The enzyme catalyses a beta-D-glucosyl-(1&lt;-&gt;1')-N-acylsphing-4-enine + H2O = an N-acylsphing-4-enine + D-glucose. It carries out the reaction a beta-D-galactosyl-(1&lt;-&gt;1')-N-acylsphing-4-enine + H2O = an N-acylsphing-4-enine + D-galactose. It catalyses the reaction cholesteryl 3-beta-D-glucoside + H2O = cholesterol + D-glucose. The catalysed reaction is a beta-D-glucosyl-(1&lt;-&gt;1')-N-acylsphing-4-enine + cholesterol = cholesteryl 3-beta-D-glucoside + an N-acylsphing-4-enine. The enzyme catalyses beta-D-glucosyl-N-(9Z-octadecenoyl)-sphing-4E-enine + cholesterol = N-(9Z-octadecenoyl)-sphing-4-enine + cholesteryl 3-beta-D-glucoside. It carries out the reaction beta-D-glucosyl-(1&lt;-&gt;1')-N-hexadecanoylsphing-4-enine + cholesterol = cholesteryl 3-beta-D-glucoside + N-hexadecanoylsphing-4-enine. It catalyses the reaction beta-D-glucosyl-N-octanoylsphing-4E-enine + cholesterol = N-octanoylsphing-4-enine + cholesteryl 3-beta-D-glucoside. The catalysed reaction is beta-D-glucosyl-N-dodecanoylsphing-4-enine + cholesterol = N-dodecanoylsphing-4-enine + cholesteryl 3-beta-D-glucoside. The enzyme catalyses beta-D-glucosyl-(1&lt;-&gt;1)-N-octadecanoylsphing-4-enine + cholesterol = N-octadecanoylsphing-4-enine + cholesteryl 3-beta-D-glucoside. It carries out the reaction beta-D-glucosyl-(1&lt;-&gt;1')-N-(15Z-tetracosenoyl)-sphing-4-enine + cholesterol = N-(15Z-tetracosenoyl)-sphing-4-enine + cholesteryl 3-beta-D-glucoside. It catalyses the reaction a beta-D-galactosyl-(1&lt;-&gt;1')-N-acylsphing-4-enine + cholesterol = cholesteryl 3-beta-D-galactoside + an N-acylsphing-4-enine. The catalysed reaction is 1-(beta-D-galactosyl)-N-dodecanoylsphing-4-enine + cholesterol = cholesteryl 3-beta-D-galactoside + N-dodecanoylsphing-4-enine. The enzyme catalyses a beta-D-xylosyl-(1&lt;-&gt;1')-N-acylsphing-4-enine + cholesterol = cholesteryl 3-beta-D-xyloside + an N-acylsphing-4-enine. It carries out the reaction beta-D-xylosyl-(1&lt;-&gt;1')-N-(9Z-octadecenoyl)-sphing-4-enine + cholesterol = cholesteryl 3-beta-D-xyloside + N-(9Z-octadecenoyl)-sphing-4-enine. Its pathway is steroid metabolism; cholesterol metabolism. It functions in the pathway sphingolipid metabolism. With respect to regulation, synergistically activated by saposin-A and saposin-C, two saposin peptides produced by proteolytic processing of prosaposin/PSAP. Saposin-C activates GBA1 through its recruitment to membranes. The membrane structure and composition in anionic phospholipids are also important for the activation. Activated by PKC in the salvage pathway of ceramide formation. Inhibited by conduritol B epoxide/CBE. Its function is as follows. Glucosylceramidase that catalyzes, within the lysosomal compartment, the hydrolysis of glucosylceramides/GlcCers (such as beta-D-glucosyl-(1&lt;-&gt;1')-N-acylsphing-4-enine) into free ceramides (such as N-acylsphing-4-enine) and glucose. Plays a central role in the degradation of complex lipids and the turnover of cellular membranes. Through the production of ceramides, participates in the PKC-activated salvage pathway of ceramide formation. Catalyzes the glucosylation of cholesterol, through a transglucosylation reaction where glucose is transferred from GlcCer to cholesterol. GlcCer containing mono-unsaturated fatty acids (such as beta-D-glucosyl-N-(9Z-octadecenoyl)-sphing-4-enine) are preferred as glucose donors for cholesterol glucosylation when compared with GlcCer containing same chain length of saturated fatty acids (such as beta-D-glucosyl-N-octadecanoyl-sphing-4-enine). Under specific conditions, may alternatively catalyze the reverse reaction, transferring glucose from cholesteryl 3-beta-D-glucoside to ceramide. Can also hydrolyze cholesteryl 3-beta-D-glucoside producing glucose and cholesterol. Catalyzes the hydrolysis of galactosylceramides/GalCers (such as beta-D-galactosyl-(1&lt;-&gt;1')-N-acylsphing-4-enine), as well as the transfer of galactose between GalCers and cholesterol in vitro, but with lower activity than with GlcCers. Contrary to GlcCer and GalCer, xylosylceramide/XylCer (such as beta-D-xyosyl-(1&lt;-&gt;1')-N-acylsphing-4-enine) is not a good substrate for hydrolysis, however it is a good xylose donor for transxylosylation activity to form cholesteryl 3-beta-D-xyloside. In Homo sapiens (Human), this protein is Lysosomal acid glucosylceramidase.